The chain runs to 421 residues: D-amino acid dehydrogenase (421 aa).

Residue 3–17 (ILILGSGVVGTASAY) participates in FAD binding.

Belongs to the DadA oxidoreductase family. FAD is required as a cofactor.

It carries out the reaction a D-alpha-amino acid + A + H2O = a 2-oxocarboxylate + AH2 + NH4(+). The protein operates within amino-acid degradation; D-alanine degradation; NH(3) and pyruvate from D-alanine: step 1/1. In terms of biological role, oxidative deamination of D-amino acids. This is D-amino acid dehydrogenase from Xanthobacter autotrophicus (strain ATCC BAA-1158 / Py2).